The sequence spans 640 residues: Chaperone protein DnaK (640 aa).

The residue at position 199 (threonine 199) is a Phosphothreonine; by autocatalysis. Residues tyrosine 603 to serine 640 are disordered. Residues glutamine 611–glutamate 621 show a composition bias toward basic and acidic residues. Residues glutamate 622–valine 632 show a composition bias toward acidic residues.

This sequence belongs to the heat shock protein 70 family.

Acts as a chaperone. The sequence is that of Chaperone protein DnaK from Nitrosococcus oceani (strain ATCC 19707 / BCRC 17464 / JCM 30415 / NCIMB 11848 / C-107).